The sequence spans 602 residues: RNA-binding NOB1-like protein (602 aa).

Positions 1–25 are disordered; that stretch reads MDPKPTSMWSSIVKKDPPSKPPVND. The PINc domain maps to 48 to 134; sequence VVDANAIIEG…LKLIALSYTL (87 aa). 2 disordered regions span residues 258–278 and 301–331; these read SQGQYDDDDDASDWRPAVSRS and IQKDQEADKARHTKEANETHAKDSGKNGEDI. Over residues 301–329 the composition is skewed to basic and acidic residues; that stretch reads IQKDQEADKARHTKEANETHAKDSGKNGE. The stretch at 331–365 forms a coiled coil; that stretch reads ISSILKDMRLEEESLRALQEETEETNAEATLINGE. The NOB1 zinc-finger motif lies at 452 to 522; sequence IRQLHRWILK…QYSIPMPKGG (71 aa). The Zn(2+) site is built by cysteine 462, cysteine 465, cysteine 477, and cysteine 480.

It belongs to the NOB1 family. Component of the small ribosomal subunit, ribosomal RNA processing complex (SSU RRP complex). In terms of tissue distribution, highly expressed in flowers and siliques and at lower levels in roots, hypocotyls, stems, leaves and seeds.

The protein localises to the nucleus. It is found in the nucleoplasm. The protein resides in the cytoplasm. In terms of biological role, essential protein required during embryogenesis and pollen development. Endonuclease cleaving pre-rRNA at the 3' end of the mature 18S rRNA (D-site); cleaves 20S pre-rRNA in the cytoplasm. Required for processing of 20S pre-rRNA precursor and biogenesis of 40S ribosomal subunits. This is RNA-binding NOB1-like protein from Arabidopsis thaliana (Mouse-ear cress).